A 99-amino-acid chain; its full sequence is Large ribosomal subunit protein uL23 (99 aa).

Belongs to the universal ribosomal protein uL23 family. In terms of assembly, part of the 50S ribosomal subunit. Contacts protein L29, and trigger factor when it is bound to the ribosome.

In terms of biological role, one of the early assembly proteins it binds 23S rRNA. One of the proteins that surrounds the polypeptide exit tunnel on the outside of the ribosome. Forms the main docking site for trigger factor binding to the ribosome. This is Large ribosomal subunit protein uL23 from Psychromonas ingrahamii (strain DSM 17664 / CCUG 51855 / 37).